Reading from the N-terminus, the 244-residue chain is 5-oxoprolinase subunit A (244 aa).

Belongs to the LamB/PxpA family. Forms a complex composed of PxpA, PxpB and PxpC.

It catalyses the reaction 5-oxo-L-proline + ATP + 2 H2O = L-glutamate + ADP + phosphate + H(+). Functionally, catalyzes the cleavage of 5-oxoproline to form L-glutamate coupled to the hydrolysis of ATP to ADP and inorganic phosphate. The polypeptide is 5-oxoprolinase subunit A (Salmonella heidelberg (strain SL476)).